The following is a 194-amino-acid chain: Putative manganese efflux pump MntP (194 aa).

6 consecutive transmembrane segments (helical) span residues 3–23, 37–57, 69–89, 110–132, 147–167, and 172–192; these read PFSI…AAIG, LRAG…GWVL, DHWI…IAGL, LGLA…SLAF, CTFS…NLIG, and ILGG…HLGA.

It belongs to the MntP (TC 9.B.29) family.

Its subcellular location is the cell inner membrane. Probably functions as a manganese efflux pump. This Xanthomonas oryzae pv. oryzae (strain MAFF 311018) protein is Putative manganese efflux pump MntP.